A 306-amino-acid chain; its full sequence is Ribosomal protein L11 methyltransferase (306 aa).

S-adenosyl-L-methionine is bound by residues Thr-152, Gly-179, Asp-201, and Asn-243.

The protein belongs to the methyltransferase superfamily. PrmA family.

It is found in the cytoplasm. The enzyme catalyses L-lysyl-[protein] + 3 S-adenosyl-L-methionine = N(6),N(6),N(6)-trimethyl-L-lysyl-[protein] + 3 S-adenosyl-L-homocysteine + 3 H(+). In terms of biological role, methylates ribosomal protein L11. The polypeptide is Ribosomal protein L11 methyltransferase (Citrifermentans bemidjiense (strain ATCC BAA-1014 / DSM 16622 / JCM 12645 / Bem) (Geobacter bemidjiensis)).